We begin with the raw amino-acid sequence, 213 residues long: Thiamine-phosphate synthase (213 aa).

4-amino-2-methyl-5-(diphosphooxymethyl)pyrimidine is bound by residues 40–44 (QYRDK) and asparagine 72. Mg(2+)-binding residues include aspartate 73 and aspartate 91. Threonine 110 serves as a coordination point for 4-amino-2-methyl-5-(diphosphooxymethyl)pyrimidine. Position 137-139 (137-139 (SHT)) interacts with 2-[(2R,5Z)-2-carboxy-4-methylthiazol-5(2H)-ylidene]ethyl phosphate. Residue lysine 140 coordinates 4-amino-2-methyl-5-(diphosphooxymethyl)pyrimidine. Glycine 167 is a binding site for 2-[(2R,5Z)-2-carboxy-4-methylthiazol-5(2H)-ylidene]ethyl phosphate.

The protein belongs to the thiamine-phosphate synthase family. Requires Mg(2+) as cofactor.

It carries out the reaction 2-[(2R,5Z)-2-carboxy-4-methylthiazol-5(2H)-ylidene]ethyl phosphate + 4-amino-2-methyl-5-(diphosphooxymethyl)pyrimidine + 2 H(+) = thiamine phosphate + CO2 + diphosphate. It catalyses the reaction 2-(2-carboxy-4-methylthiazol-5-yl)ethyl phosphate + 4-amino-2-methyl-5-(diphosphooxymethyl)pyrimidine + 2 H(+) = thiamine phosphate + CO2 + diphosphate. The catalysed reaction is 4-methyl-5-(2-phosphooxyethyl)-thiazole + 4-amino-2-methyl-5-(diphosphooxymethyl)pyrimidine + H(+) = thiamine phosphate + diphosphate. The protein operates within cofactor biosynthesis; thiamine diphosphate biosynthesis; thiamine phosphate from 4-amino-2-methyl-5-diphosphomethylpyrimidine and 4-methyl-5-(2-phosphoethyl)-thiazole: step 1/1. In terms of biological role, condenses 4-methyl-5-(beta-hydroxyethyl)thiazole monophosphate (THZ-P) and 2-methyl-4-amino-5-hydroxymethyl pyrimidine pyrophosphate (HMP-PP) to form thiamine monophosphate (TMP). This is Thiamine-phosphate synthase from Stutzerimonas stutzeri (strain A1501) (Pseudomonas stutzeri).